Reading from the N-terminus, the 113-residue chain is Probable 4-amino-4-deoxy-L-arabinose-phosphoundecaprenol flippase subunit ArnE (113 aa).

3 helical membrane-spanning segments follow: residues 39-59 (IFWL…WLRL), 62-82 (ILPL…VTLI), and 91-111 (VNVK…LMSM). The EamA domain maps to 42–111 (LITAIAMLGF…IMLGIVLMSM (70 aa)).

Belongs to the ArnE family. Heterodimer of ArnE and ArnF.

The protein localises to the cell inner membrane. Its pathway is bacterial outer membrane biogenesis; lipopolysaccharide biosynthesis. Translocates 4-amino-4-deoxy-L-arabinose-phosphoundecaprenol (alpha-L-Ara4N-phosphoundecaprenol) from the cytoplasmic to the periplasmic side of the inner membrane. The polypeptide is Probable 4-amino-4-deoxy-L-arabinose-phosphoundecaprenol flippase subunit ArnE (Proteus mirabilis (strain HI4320)).